The following is a 461-amino-acid chain: uncharacterized protein (461 aa).

Residues 86 to 127 (KMKPNKDDDEEEDEDDEDDEDDEEEDNEEEDNEEENEITIAP) are disordered. Residues 92-122 (DDDEEEDEDDEDDEDDEEEDNEEEDNEEENE) show a composition bias toward acidic residues. Coiled coils occupy residues 95-123 (EEEDEDDEDDEDDEEEDNEEEDNEEENEI) and 405-459 (NKYI…KLKK).

The protein belongs to the mimivirus L5 family.

This is an uncharacterized protein from Acanthamoeba polyphaga mimivirus (APMV).